We begin with the raw amino-acid sequence, 298 residues long: tRNA(Met) cytidine acetate ligase (298 aa).

ATP contacts are provided by residues 6-19 (IAEY…HIYQ), Gly100, Asn157, and Arg182.

Belongs to the TmcAL family.

The protein localises to the cytoplasm. The enzyme catalyses cytidine(34) in elongator tRNA(Met) + acetate + ATP = N(4)-acetylcytidine(34) in elongator tRNA(Met) + AMP + diphosphate. Its function is as follows. Catalyzes the formation of N(4)-acetylcytidine (ac(4)C) at the wobble position of elongator tRNA(Met), using acetate and ATP as substrates. First activates an acetate ion to form acetyladenylate (Ac-AMP) and then transfers the acetyl group to tRNA to form ac(4)C34. The polypeptide is tRNA(Met) cytidine acetate ligase (Mycoplasmopsis pulmonis (strain UAB CTIP) (Mycoplasma pulmonis)).